The chain runs to 311 residues: Malate dehydrogenase (311 aa).

NAD(+) contacts are provided by residues 7–13 (GAAGGIG) and aspartate 34. Arginine 81 and arginine 87 together coordinate substrate. NAD(+)-binding positions include asparagine 94 and 117-119 (ITN). Residues asparagine 119 and arginine 153 each contribute to the substrate site. Catalysis depends on histidine 177, which acts as the Proton acceptor. Residue methionine 227 participates in NAD(+) binding.

This sequence belongs to the LDH/MDH superfamily. MDH type 1 family. As to quaternary structure, homodimer.

It carries out the reaction (S)-malate + NAD(+) = oxaloacetate + NADH + H(+). Functionally, catalyzes the reversible oxidation of malate to oxaloacetate. The polypeptide is Malate dehydrogenase (Yersinia enterocolitica serotype O:8 / biotype 1B (strain NCTC 13174 / 8081)).